The chain runs to 508 residues: 6-phosphogluconate dehydrogenase, decarboxylating 2, chloroplastic (508 aa).

The N-terminal 12 residues, 1–12 (MASPAPAPPAAS), are a transit peptide targeting the chloroplast. NADP(+)-binding positions include 28–33 (GLATMG), 51–53 (NRT), 95–97 (VQA), and asparagine 123. Substrate contacts are provided by residues asparagine 123 and 149–151 (SGG). The Proton acceptor role is filled by lysine 203. 206 to 207 (HN) is a binding site for substrate. Glutamate 210 acts as the Proton donor in catalysis. 5 residues coordinate substrate: tyrosine 211, lysine 284, arginine 311, arginine 475, and histidine 481.

The protein belongs to the 6-phosphogluconate dehydrogenase family. Homodimer.

It localises to the plastid. The protein localises to the chloroplast. The catalysed reaction is 6-phospho-D-gluconate + NADP(+) = D-ribulose 5-phosphate + CO2 + NADPH. Its pathway is carbohydrate degradation; pentose phosphate pathway; D-ribulose 5-phosphate from D-glucose 6-phosphate (oxidative stage): step 3/3. Its function is as follows. Catalyzes the oxidative decarboxylation of 6-phosphogluconate to ribulose 5-phosphate and CO(2), with concomitant reduction of NADP to NADPH. This is 6-phosphogluconate dehydrogenase, decarboxylating 2, chloroplastic (G6PGH2) from Oryza sativa subsp. japonica (Rice).